Reading from the N-terminus, the 236-residue chain is Phosphatidylserine decarboxylase proenzyme (236 aa).

The Schiff-base intermediate with substrate; via pyruvic acid role is filled by S194. S194 carries the pyruvic acid (Ser); by autocatalysis modification.

Belongs to the phosphatidylserine decarboxylase family. PSD-A subfamily. As to quaternary structure, heterodimer of a large membrane-associated beta subunit and a small pyruvoyl-containing alpha subunit. It depends on pyruvate as a cofactor. In terms of processing, is synthesized initially as an inactive proenzyme. Formation of the active enzyme involves a self-maturation process in which the active site pyruvoyl group is generated from an internal serine residue via an autocatalytic post-translational modification. Two non-identical subunits are generated from the proenzyme in this reaction, and the pyruvate is formed at the N-terminus of the alpha chain, which is derived from the carboxyl end of the proenzyme. The post-translation cleavage follows an unusual pathway, termed non-hydrolytic serinolysis, in which the side chain hydroxyl group of the serine supplies its oxygen atom to form the C-terminus of the beta chain, while the remainder of the serine residue undergoes an oxidative deamination to produce ammonia and the pyruvoyl prosthetic group on the alpha chain.

Its subcellular location is the cell membrane. It catalyses the reaction a 1,2-diacyl-sn-glycero-3-phospho-L-serine + H(+) = a 1,2-diacyl-sn-glycero-3-phosphoethanolamine + CO2. The protein operates within phospholipid metabolism; phosphatidylethanolamine biosynthesis; phosphatidylethanolamine from CDP-diacylglycerol: step 2/2. Functionally, catalyzes the formation of phosphatidylethanolamine (PtdEtn) from phosphatidylserine (PtdSer). The polypeptide is Phosphatidylserine decarboxylase proenzyme (Rhodospirillum rubrum (strain ATCC 11170 / ATH 1.1.1 / DSM 467 / LMG 4362 / NCIMB 8255 / S1)).